Reading from the N-terminus, the 920-residue chain is Puromycin-sensitive aminopeptidase (920 aa).

Residues glutamate 181 and 317 to 321 (GAMEN) contribute to the substrate site. Histidine 353 is a binding site for Zn(2+). Glutamate 354 functions as the Proton acceptor in the catalytic mechanism. Zn(2+) contacts are provided by histidine 357 and glutamate 376. Tyrosine 465 carries the post-translational modification 3'-nitrotyrosine. The Nuclear localization signal motif lies at 727 to 731 (RRRFK).

Belongs to the peptidase M1 family. As to quaternary structure, monomer. Zn(2+) is required as a cofactor. In terms of tissue distribution, widely expressed. Highest expression in brain, particularly the striatum and hippocampus. Expressed in Sertoli cells.

The protein localises to the cytoplasm. The protein resides in the cytosol. It localises to the nucleus. The enzyme catalyses Release of an N-terminal amino acid, preferentially alanine, from a wide range of peptides, amides and arylamides.. Strongly inhibited by bestatin, leuhistin, actinonin, amastatin, 1,10-phenanthroline, DFP, PCMBS, Zn(2+), Cd(2+), Co(2+), Cu(2+), Hg(2+), EDTA and puromycin. Not inhibited by PMSF, and only slightly inhibited by leupeptin and aprotinin. Activity is increased by Mg(2+) and Ca(2+). In terms of biological role, aminopeptidase with broad substrate specificity for several peptides. Involved in proteolytic events essential for cell growth and viability. May act as regulator of neuropeptide activity. Plays a role in the antigen-processing pathway for MHC class I molecules. Involved in the N-terminal trimming of cytotoxic T-cell epitope precursors. Digests the poly-Q peptides found in many cellular proteins. This chain is Puromycin-sensitive aminopeptidase (Npepps), found in Mus musculus (Mouse).